A 280-amino-acid chain; its full sequence is Pyrethroid hydrolase (280 aa).

Residues aspartate 202 and histidine 230 each act as charge relay system in the active site. A disordered region spans residues 254-280; the sequence is YRQTATKAGPDRPAGADGGRADRADLP.

This sequence belongs to the AB hydrolase superfamily. In terms of assembly, monomer.

It catalyses the reaction (-)-trans-permethrin + H2O = (3-phenoxyphenyl)methanol + (1S,3R)-3-(2,2-dichlorovinyl)-2,2-dimethylcyclopropanecarboxylate + H(+). In terms of biological role, catalyzes the hydrolysis of pyrethroids pesticides. Catalyzes the hydrolysis of cypermethrin to equimolar amounts of cyano-3-phenoxybenzyl alcohol and 2,2-dimethyl-3-(2,2-dichlorovinyl)-cyclopropanecarboxylic acid. Hydrolyzes cis-permethrin at approximately equal rate to trans-permethrin. This is Pyrethroid hydrolase (pytH) from Sphingobium wenxiniae (strain DSM 21828 / CGMCC 1.7748 / JZ-1).